Reading from the N-terminus, the 321-residue chain is Cyclic AMP-AMP-AMP synthase (321 aa).

Lysine 63 is an ATP binding site. Mg(2+) contacts are provided by aspartate 72 and aspartate 74. ATP is bound by residues aspartate 74, histidine 162, lysine 185, 201 to 203, and asparagine 270; that span reads KSF.

This sequence belongs to the CD-NTase family. A01 subfamily. As to quaternary structure, forms complexes with Cap7 with 1:1 and 2:2 stoichimetry, and a 1:1:6 CdnC:Cap7:Cap6 complex. It depends on Mg(2+) as a cofactor.

It catalyses the reaction 3 ATP = 3',3',3'-c-tri-AMP + 3 diphosphate. The catalysed reaction is 2 ATP = 3',3'-c-di-AMP + 2 diphosphate. With respect to regulation, the 2:2 CdnC:Cap7 (Cap7 is also called HORMA) complex is activated for cAAA synthesis by long dsDNA, but not 40 bp dsDNA or ssDNA; the 1:1 complex is inactive in vitro. The 2:2:DNA complex is catalytically disassembled and inactivated by Cap6 (also called Trip13). Its function is as follows. Cyclic nucleotide synthase (second messenger synthase) of a CBASS antivirus system. CBASS (cyclic oligonucleotide-based antiphage signaling system) provides immunity against bacteriophage. The CD-NTase protein synthesizes cyclic nucleotides in response to infection; these serve as specific second messenger signals. The signals activate a diverse range of effectors, leading to bacterial cell death and thus abortive phage infection. A type III-C(AAA) CBASS system. Functionally, cyclic nucleotide synthase that upon activation catalyzes the synthesis of 3',3',3'-cyclic AMP-AMP-AMP (3',3',3'-c-tri-AMP or cAAA) as the major product, and 3',3'-c-di-AMP as a minor product. Cannot use GTP as a substrate. Protects E.coli strain JP313 against bacteriophage lambda cI- infection. When the cdnC-cap7-cap6-nucC operon is transformed into a susceptible strain it confers bacteriophage immunity. Mutations in the sensor (Cap7 also called HORMA) or effector proteins (CdnC, NucC) but not the disassembly protein (Cap6 also called Trip13) no longer confer immunity. The presence of the intact operon leads to culture collapse and cell death, which occurs before the phage has finished its replication cycle, thus protecting non-infected bacteria by aborting the phage infection and preventing its propagation. This chain is Cyclic AMP-AMP-AMP synthase, found in Escherichia coli (strain MS 115-1).